We begin with the raw amino-acid sequence, 1392 residues long: Ankyrin repeat domain-containing protein 30B (1392 aa).

Positions M1–F21 are disordered. ANK repeat units lie at residues K72–V101, E105–Y134, Y138–V167, A171–A200, and S204–A233. Disordered stretches follow at residues P265–P292, A558–K587, D636–G656, R671–G690, K830–E877, and G904–V926. Composition is skewed to polar residues over residues N267–T280 and D576–Q586. Basic and acidic residues predominate over residues D636–L650. Over residues K830–Q840 the composition is skewed to polar residues. 2 stretches are compositionally biased toward basic and acidic residues: residues L864–S874 and G904–H915. Coiled-coil stretches lie at residues R960–K1168 and E1270–V1318.

Expressed in brain, breast and testis.

The polypeptide is Ankyrin repeat domain-containing protein 30B (ANKRD30B) (Homo sapiens (Human)).